Consider the following 546-residue polypeptide: Probable acyl-activating enzyme 21 (546 aa).

The protein belongs to the ATP-dependent AMP-binding enzyme family.

May act as an acid--thiol ligase that activates carboxylic acids by forming acyl-CoAs. This is Probable acyl-activating enzyme 21 (AEE21) from Arabidopsis thaliana (Mouse-ear cress).